Reading from the N-terminus, the 88-residue chain is MKKGIHPENYREVLFYDGSVQQGWIIRSCAATNKTMVWEDGKEYPLYPLDTSSASHPVYTGKRREANTEGRASKFNERFKGISSLTKK.

Belongs to the bacterial ribosomal protein bL31 family. Type B subfamily. As to quaternary structure, part of the 50S ribosomal subunit.

The protein is Large ribosomal subunit protein bL31B of Glaesserella parasuis serovar 5 (strain SH0165) (Haemophilus parasuis).